We begin with the raw amino-acid sequence, 131 residues long: Large ribosomal subunit protein bL12 (131 aa).

Over residues 100–125 (STPKPIKEGISKEDAEAAKKQLEDAG) the composition is skewed to basic and acidic residues. The segment at 100–131 (STPKPIKEGISKEDAEAAKKQLEDAGGKVSIK) is disordered.

It belongs to the bacterial ribosomal protein bL12 family. In terms of assembly, homodimer. Part of the ribosomal stalk of the 50S ribosomal subunit. Forms a multimeric L10(L12)X complex, where L10 forms an elongated spine to which 2 to 4 L12 dimers bind in a sequential fashion. Binds GTP-bound translation factors.

Functionally, forms part of the ribosomal stalk which helps the ribosome interact with GTP-bound translation factors. Is thus essential for accurate translation. In Cyanothece sp. (strain PCC 7425 / ATCC 29141), this protein is Large ribosomal subunit protein bL12.